The chain runs to 147 residues: 3-dehydroquinate dehydratase (147 aa).

Catalysis depends on Tyr-23, which acts as the Proton acceptor. Asn-74, His-80, and Asp-87 together coordinate substrate. The active-site Proton donor is His-100. Substrate is bound by residues 101–102 and Arg-111; that span reads LS.

This sequence belongs to the type-II 3-dehydroquinase family. In terms of assembly, homododecamer.

The catalysed reaction is 3-dehydroquinate = 3-dehydroshikimate + H2O. It participates in metabolic intermediate biosynthesis; chorismate biosynthesis; chorismate from D-erythrose 4-phosphate and phosphoenolpyruvate: step 3/7. In terms of biological role, catalyzes a trans-dehydration via an enolate intermediate. The chain is 3-dehydroquinate dehydratase from Glaesserella parasuis serovar 5 (strain SH0165) (Haemophilus parasuis).